The sequence spans 186 residues: MTATPLTNLFLRAPDITHVAPPYCLNATWQAETAMHTSKTDSACVAVRSYLVRASCETSGTIHCFFFAVYKDTHHTPPLITELRNFADLVNHPPVLRELEDKRGVRLRCARPFSVGTIKDVSGSGASSAGEYTINGIVYHCHCRYPFSKTCWMGASAALQHLRSISSSGMAARAAEHRRVKIKIKA.

The protein belongs to the alphaherpesvirinae HHV-1 UL55 family.

The protein resides in the virion tegument. Its subcellular location is the host nucleus matrix. This Homo sapiens (Human) protein is Tegument protein UL55.